We begin with the raw amino-acid sequence, 513 residues long: Light-independent protochlorophyllide reductase subunit B (513 aa).

[4Fe-4S] cluster is bound at residue Asp-36. Asp-299 acts as the Proton donor in catalysis. 434-435 (GM) is a substrate binding site.

It belongs to the ChlB/BchB/BchZ family. In terms of assembly, protochlorophyllide reductase is composed of three subunits; ChlL, ChlN and ChlB. Forms a heterotetramer of two ChlB and two ChlN subunits. It depends on [4Fe-4S] cluster as a cofactor.

It localises to the plastid. The protein resides in the chloroplast. The catalysed reaction is chlorophyllide a + oxidized 2[4Fe-4S]-[ferredoxin] + 2 ADP + 2 phosphate = protochlorophyllide a + reduced 2[4Fe-4S]-[ferredoxin] + 2 ATP + 2 H2O. It functions in the pathway porphyrin-containing compound metabolism; chlorophyll biosynthesis (light-independent). Functionally, component of the dark-operative protochlorophyllide reductase (DPOR) that uses Mg-ATP and reduced ferredoxin to reduce ring D of protochlorophyllide (Pchlide) to form chlorophyllide a (Chlide). This reaction is light-independent. The NB-protein (ChlN-ChlB) is the catalytic component of the complex. This chain is Light-independent protochlorophyllide reductase subunit B, found in Anthoceros angustus (Hornwort).